Consider the following 255-residue polypeptide: Envelope glycoprotein E (255 aa).

Over 1 to 110 (GSTWPSRCHS…QELGAWTRHY (110 aa)) the chain is Virion surface. The chain crosses the membrane as a helical span at residues 111-131 (LAFLLIIICTCAALLIALVVW). At 132–255 (GCILYIRSNR…VASKLRSILK (124 aa)) the chain is on the intravirion side. The Internalization motif signature appears at 154 to 157 (YTSV). The tract at residues 173-187 (ASDSDDSFDSSSDEE) is acidic. Positions 176–189 (SDDSFDSSSDEELE) are enriched in acidic residues. Disordered stretches follow at residues 176-210 (SDDS…SADA) and 223-245 (DTPE…DYSK).

The protein belongs to the alphaherpesvirinae glycoprotein E family. As to quaternary structure, interacts with gI. In terms of processing, phosphorylated on serines within the acidic cluster. Phosphorylation determines whether endocytosed viral gE traffics to the trans-Golgi network or recycles to the cell membrane.

The protein localises to the virion membrane. Its subcellular location is the host cell membrane. The protein resides in the host cell junction. It is found in the host Golgi apparatus membrane. It localises to the host endosome membrane. In terms of biological role, in epithelial cells, the heterodimer gE/gI is required for the cell-to-cell spread of the virus, by sorting nascent virions to cell junctions. Once the virus reaches the cell junctions, virus particles can spread to adjacent cells extremely rapidly through interactions with cellular receptors that accumulate at these junctions. Implicated in basolateral spread in polarized cells. In neuronal cells, gE/gI is essential for the anterograde spread of the infection throughout the host nervous system. Together with US9, the heterodimer gE/gI is involved in the sorting and transport of viral structural components toward axon tips. The chain is Envelope glycoprotein E (gE) from Equus caballus (Horse).